The chain runs to 444 residues: Homocysteine/cysteine synthase (444 aa).

At lysine 208 the chain carries N6-(pyridoxal phosphate)lysine.

Belongs to the trans-sulfuration enzymes family. Homotetramer. Requires pyridoxal 5'-phosphate as cofactor.

Its subcellular location is the cytoplasm. The catalysed reaction is O-acetyl-L-homoserine + methanethiol = L-methionine + acetate + H(+). The enzyme catalyses O-acetyl-L-homoserine + hydrogen sulfide = L-homocysteine + acetate. It catalyses the reaction O-acetyl-L-serine + hydrogen sulfide = L-cysteine + acetate. The protein operates within amino-acid biosynthesis; L-methionine biosynthesis via de novo pathway; L-homocysteine from O-acetyl-L-homoserine. Its pathway is amino-acid biosynthesis; L-cysteine biosynthesis; L-cysteine from L-serine: step 2/2. Catalyzes the conversion of O-acetyl-L-homoserine (OAH) into homocysteine in the methionine biosynthesis pathway. Also catalyzes the conversion of O-acetylserine (OAS) into cysteine, the last step in the cysteine biosynthesis pathway. The polypeptide is Homocysteine/cysteine synthase (MET17) (Kluyveromyces lactis (strain ATCC 8585 / CBS 2359 / DSM 70799 / NBRC 1267 / NRRL Y-1140 / WM37) (Yeast)).